The chain runs to 279 residues: Movement protein (279 aa).

A disordered region spans residues 246 to 279 (SESEELNVESPPAAIGSSSASRSEAFRPQVVNGL). A compositionally biased stretch (low complexity) spans 254–268 (ESPPAAIGSSSASRS).

It belongs to the cucumovirus movement protein family.

The protein localises to the host cell junction. It localises to the host plasmodesma. Functionally, transports viral genome to neighboring plant cells directly through plasmosdesmata, without any budding. The movement protein allows efficient cell to cell propagation, by bypassing the host cell wall barrier. Acts by forming a tubular structure at the host plasmodesmata, enlarging it enough to allow free passage of virion capsids. The polypeptide is Movement protein (Cucumber mosaic virus (strain N) (CMV)).